The following is a 338-amino-acid chain: MKRINLTRYLIEEQREHNTIPAELRLLLEVVARACKAISHSVNKGALAGVLGSAGTGNVQGETQQKLDVIANEVLLEANEYGGNLAAMASEEMESFYEIPHRYPKGEYLLLFDPLDGSSNIDVNVSIGTIFSVLHMPKPGQTVTEADFMQPGVRQVAAGYAVYGPQTTLVLTVGNGVHMFTLDREVGSFILTNRDVKIPADTKEFAINMSNMRHWAPPVRRYIDECLAGTEGPRGKDFNMRWIASMVADVHRILTRGGIFMYPWDKREPGKAGKLRLMYEANPMAFLVEQAGGAATNGHQRILEIQPEKLHQRVAVILGSKNEVDRVTQYHREAQQTA.

Positions 91, 113, 115, and 116 each coordinate Mg(2+). Residues 116 to 119, Asn-208, and Lys-274 each bind substrate; that span reads DGSS. A Mg(2+)-binding site is contributed by Glu-280.

It belongs to the FBPase class 1 family. In terms of assembly, homotetramer. Requires Mg(2+) as cofactor.

Its subcellular location is the cytoplasm. It carries out the reaction beta-D-fructose 1,6-bisphosphate + H2O = beta-D-fructose 6-phosphate + phosphate. It functions in the pathway carbohydrate biosynthesis; gluconeogenesis. This Ralstonia nicotianae (strain ATCC BAA-1114 / GMI1000) (Ralstonia solanacearum) protein is Fructose-1,6-bisphosphatase class 1.